We begin with the raw amino-acid sequence, 197 residues long: Phosphoheptose isomerase (197 aa).

Positions 34-192 (MVNALINGNK…CEGVDDCLFP (159 aa)) constitute an SIS domain. Residues 49-51 (NGG), Q62, 91-92 (ND), S122, and H172 contribute to the substrate site. Zn(2+) is bound at residue Q62. Zn(2+)-binding residues include H172 and H180.

It belongs to the SIS family. GmhA subfamily. Homotetramer. It depends on Zn(2+) as a cofactor.

It localises to the cytoplasm. It catalyses the reaction 2 D-sedoheptulose 7-phosphate = D-glycero-alpha-D-manno-heptose 7-phosphate + D-glycero-beta-D-manno-heptose 7-phosphate. It participates in carbohydrate biosynthesis; D-glycero-D-manno-heptose 7-phosphate biosynthesis; D-glycero-alpha-D-manno-heptose 7-phosphate and D-glycero-beta-D-manno-heptose 7-phosphate from sedoheptulose 7-phosphate: step 1/1. Catalyzes the isomerization of sedoheptulose 7-phosphate in D-glycero-D-manno-heptose 7-phosphate. In Pseudoalteromonas atlantica (strain T6c / ATCC BAA-1087), this protein is Phosphoheptose isomerase.